The sequence spans 598 residues: UvrABC system protein C (598 aa).

The 80-residue stretch at 13–92 folds into the GIY-YIG domain; sequence SSPGVYLMKD…IKKYQPRYNV (80 aa). Residues 206-241 enclose the UVR domain; the sequence is DTTIANLEEAIKKASQEHKFEHAAALYRTLTLIRQT.

Belongs to the UvrC family. Interacts with UvrB in an incision complex.

The protein localises to the cytoplasm. Functionally, the UvrABC repair system catalyzes the recognition and processing of DNA lesions. UvrC both incises the 5' and 3' sides of the lesion. The N-terminal half is responsible for the 3' incision and the C-terminal half is responsible for the 5' incision. The polypeptide is UvrABC system protein C (Chlamydia muridarum (strain MoPn / Nigg)).